The primary structure comprises 2698 residues: Zinc finger protein 292 (2698 aa).

A C2H2-type 1 zinc finger spans residues 567 to 589; it reads YSCPICAKNFNSKDSFVPHVTLH. Residue S654 is modified to Phosphoserine. 6 C2H2-type zinc fingers span residues 681–705, 722–744, 750–774, 779–803, 807–831, and 1085–1110; these read FNCPVTFCKKGFKYFKNLIAHVKGH, VICQYCRRHFVSVTHLNDHLQMH, YICIQMKCKAGFNSYAELLAHRKEH, AKCLFPKCGRIFSQAYLLYDHEAQH, YTCKFTGCGKVYRSQSEMEKHQDGH, and FSCQVEGCTRTYNSSQSIGKHMKTAH. Residues 822-834 are compositionally biased toward basic and acidic residues; the sequence is SEMEKHQDGHSHP. Residues 822 to 894 are disordered; that stretch reads SEMEKHQDGH…AEPAVTKHGQ (73 aa). K1104 is modified (N6-acetyllysine). S1146 is subject to Phosphoserine. Residues 1278 to 1325 are compositionally biased toward polar residues; sequence NSTNHYPSQTDGNINSSFLKGGSSENGVFPSQVSSADDFSSTSAQPST. A disordered region spans residues 1278–1349; that stretch reads NSTNHYPSQT…KERKPKHNKR (72 aa). The segment at 1361-1383 adopts a C2H2-type 8; degenerate zinc-finger fold; sequence FICSRCYRAFTNPRSLGGHLSKR. Polar residues-rich tracts occupy residues 1574 to 1603 and 1624 to 1633; these read FSSSTEPPQNFTNNSAHVSVISGPQNTRSS and SVSNTSQNVL. Residues 1574-1656 are disordered; it reads FSSSTEPPQN…PVPDTNTRSD (83 aa). 2 C2H2-type zinc fingers span residues 1879–1904 and 1924–1949; these read FVCQNQGCNYSAMTKDALFKHYGKIH and FKCVVPSCTKTFTRNSNLRAHCQLVH. Residues 1964 to 1997 form a disordered region; the sequence is PYGRKSQSENLSSPQNNQVKKQPSMAEETKTESQ. A compositionally biased stretch (polar residues) spans 1971–1984; the sequence is SENLSSPQNNQVKK. K2020 carries the N6-acetyllysine modification. Basic and acidic residues predominate over residues 2021 to 2032; that stretch reads QLAEKKSPEKPE. The tract at residues 2021–2075 is disordered; it reads QLAEKKSPEKPESSSQPVTSSAEQYNANLANLKTKGRKNKRHRKEKEEKREKNPV. Residues 2038–2051 show a composition bias toward polar residues; that stretch reads VTSSAEQYNANLAN. A compositionally biased stretch (basic residues) spans 2054–2064; it reads TKGRKNKRHRK. C2H2-type zinc fingers lie at residues 2091 to 2116, 2149 to 2174, 2193 to 2218, and 2233 to 2258; these read YCCVHQGCFAAFTIQQNLILHYQAVH, FRCQVSDCSRIFQAITGLIQHYMKLH, FPCDQLECKLSFTTYLSYVVHLEVDH, and YKCDCEGCDRIYATRSNLLRHIFNKH. Residues 2262 to 2271 are compositionally biased toward basic residues; the sequence is HKAHLIRPRK. The tract at residues 2262 to 2323 is disordered; the sequence is HKAHLIRPRK…KSNLENKSAK (62 aa). The segment at 2362–2386 adopts a C2H2-type 15 zinc-finger fold; it reads YPCMIKGCTSVVTSESNIIRHYKCH. Disordered regions lie at residues 2411–2454, 2467–2553, and 2580–2608; these read GKEI…GEKD, LINE…EEHP, and KQKKNSDRDHSNSGSKRGSHSSSRRHVDK. The segment covering 2421 to 2437 has biased composition (basic and acidic residues); the sequence is KNDKKDPDSSVLEKNDN. A compositionally biased stretch (polar residues) spans 2470–2488; it reads EDSTNAENQGNTTLKGNNE. 2 stretches are compositionally biased toward basic and acidic residues: residues 2489-2501 and 2580-2590; these read FQEHDSCTSERQK and KQKKNSDRDHS. Residues 2596-2606 are compositionally biased toward basic residues; the sequence is RGSHSSSRRHV.

It belongs to the krueppel C2H2-type zinc-finger protein family. In terms of tissue distribution, expressed in postnatal day 1 (P1) pituitary. Also detected in presomatotrophic cell line GHFT1-5.

It is found in the nucleus. May be involved in transcriptional regulation. This Mus musculus (Mouse) protein is Zinc finger protein 292.